We begin with the raw amino-acid sequence, 142 residues long: Transmembrane protein 170A (142 aa).

Over 1–48 (MEGGGGGLGGEPGLLQQILSLRLVPRVGNVTDCQRATLCSFPEMWYGV) the chain is Lumenal. An N-linked (GlcNAc...) asparagine glycan is attached at N29. The chain crosses the membrane as a helical span at residues 49-69 (FLWALVSSLFFHIPAGLLALF). The Cytoplasmic portion of the chain corresponds to 70 to 78 (TLRHHKYGR). A helical membrane pass occupies residues 79-99 (FMSVGIFLMGVLGPISAGILT). The Lumenal portion of the chain corresponds to 100-114 (SAAIAGVYKAAGKEM). The helical transmembrane segment at 115 to 135 (IPFEALVLGVGQTFCVLIVSF) threads the bilayer. Residues 136 to 142 (LRILATL) lie on the Cytoplasmic side of the membrane.

Belongs to the TMEM170 family.

The protein resides in the endoplasmic reticulum membrane. The protein localises to the nucleus envelope. Its function is as follows. May regulate membrane morphogenesis in the endoplasmic reticulum (ER) by promoting ER sheet formation at the expense of ER tubules. This is Transmembrane protein 170A (tmem170a) from Xenopus laevis (African clawed frog).